A 115-amino-acid chain; its full sequence is Large ribosomal subunit protein uL22c (115 aa).

This sequence belongs to the universal ribosomal protein uL22 family. Part of the 50S ribosomal subunit.

It is found in the plastid. The protein resides in the chloroplast. Its function is as follows. This protein binds specifically to 23S rRNA. The globular domain of the protein is located near the polypeptide exit tunnel on the outside of the subunit, while an extended beta-hairpin is found that lines the wall of the exit tunnel in the center of the 70S ribosome. The polypeptide is Large ribosomal subunit protein uL22c (rpl22) (Phaeodactylum tricornutum (strain CCAP 1055/1)).